Here is a 285-residue protein sequence, read N- to C-terminus: uncharacterized protein (285 aa).

The ATP-grasp domain occupies Phe-107–Pro-285.

This is an uncharacterized protein from Mycoplasma pneumoniae (strain ATCC 29342 / M129 / Subtype 1) (Mycoplasmoides pneumoniae).